Consider the following 342-residue polypeptide: RNA 3'-terminal phosphate cyclase (342 aa).

ATP is bound by residues Q103 and 283-287 (YLADQ). H308 serves as the catalytic Tele-AMP-histidine intermediate.

The protein belongs to the RNA 3'-terminal cyclase family. Type 1 subfamily.

It is found in the cytoplasm. It carries out the reaction a 3'-end 3'-phospho-ribonucleotide-RNA + ATP = a 3'-end 2',3'-cyclophospho-ribonucleotide-RNA + AMP + diphosphate. In terms of biological role, catalyzes the conversion of 3'-phosphate to a 2',3'-cyclic phosphodiester at the end of RNA. The mechanism of action of the enzyme occurs in 3 steps: (A) adenylation of the enzyme by ATP; (B) transfer of adenylate to an RNA-N3'P to produce RNA-N3'PP5'A; (C) and attack of the adjacent 2'-hydroxyl on the 3'-phosphorus in the diester linkage to produce the cyclic end product. The biological role of this enzyme is unknown but it is likely to function in some aspects of cellular RNA processing. This is RNA 3'-terminal phosphate cyclase (rtcA) from Escherichia coli O157:H7.